Here is a 246-residue protein sequence, read N- to C-terminus: Electron transfer flavoprotein beta subunit lysine methyltransferase (246 aa).

Belongs to the methyltransferase superfamily. ETFBKMT family.

Its subcellular location is the cytoplasm. It localises to the mitochondrion matrix. It carries out the reaction L-lysyl-[protein] + 3 S-adenosyl-L-methionine = N(6),N(6),N(6)-trimethyl-L-lysyl-[protein] + 3 S-adenosyl-L-homocysteine + 3 H(+). Protein-lysine methyltransferase that selectively trimethylates the flavoprotein ETFB in mitochondria. Thereby, may negatively regulate the function of ETFB in electron transfer from Acyl-CoA dehydrogenases to the main respiratory chain. This chain is Electron transfer flavoprotein beta subunit lysine methyltransferase (etfbkmt), found in Xenopus laevis (African clawed frog).